The following is a 159-amino-acid chain: SGTTDFYRRIITSEASASTLSLENFXHRVTESINMYEKCFKNETMRKCVYDRSLSLLSGVRLRIGLYWIYLQDWFSVFPKENFYIIKTEDYAKCLKCTFKKVYRFLGLPQLNRTNEAFMESIPKANTRRFKDTKMGKMWKETYELLEKFYQPHNERLVK.

Topologically, residues 1–159 (SGTTDFYRRI…YQPHNERLVK (159 aa)) are lumenal. Residues N42 and N112 are each glycosylated (N-linked (GlcNAc...) asparagine).

It belongs to the sulfotransferase 1 family. The cofactor is a divalent metal cation. Glutathione serves as cofactor.

The protein localises to the golgi apparatus membrane. The enzyme catalyses dermatan 4'-sulfate + n 3'-phosphoadenylyl sulfate = dermatan 4',6'-bissulfate + n adenosine 3',5'-bisphosphate + n H(+). It catalyses the reaction chondroitin 4'-sulfate + n 3'-phosphoadenylyl sulfate = chondroitin 4',6'-bissulfate + n adenosine 3',5'-bisphosphate + n H(+). Its function is as follows. Sulfotransferase that transfers sulfate from 3'-phosphoadenosine 5'-phosphosulfate (PAPS) to the C-6 hydroxyl group of the GalNAc 4-sulfate residue of chondroitin sulfate A and forms chondroitin sulfate E containing GlcA-GalNAc(4,6-SO(4)) repeating units. In Nototodarus sloanii (Wellington flying squid), this protein is Carbohydrate sulfotransferase 15 (GALNAC4S6ST).